Consider the following 243-residue polypeptide: Pyridoxine 5'-phosphate synthase (243 aa).

Asn9 serves as a coordination point for 3-amino-2-oxopropyl phosphate. Residue 11 to 12 participates in 1-deoxy-D-xylulose 5-phosphate binding; that stretch reads DH. Arg20 contributes to the 3-amino-2-oxopropyl phosphate binding site. The active-site Proton acceptor is the His45. Arg47 and His52 together coordinate 1-deoxy-D-xylulose 5-phosphate. Glu72 functions as the Proton acceptor in the catalytic mechanism. Thr102 contacts 1-deoxy-D-xylulose 5-phosphate. The Proton donor role is filled by His193. 3-amino-2-oxopropyl phosphate-binding positions include Gly194 and 215 to 216; that span reads GH.

The protein belongs to the PNP synthase family. As to quaternary structure, homooctamer; tetramer of dimers.

Its subcellular location is the cytoplasm. The catalysed reaction is 3-amino-2-oxopropyl phosphate + 1-deoxy-D-xylulose 5-phosphate = pyridoxine 5'-phosphate + phosphate + 2 H2O + H(+). The protein operates within cofactor biosynthesis; pyridoxine 5'-phosphate biosynthesis; pyridoxine 5'-phosphate from D-erythrose 4-phosphate: step 5/5. Its function is as follows. Catalyzes the complicated ring closure reaction between the two acyclic compounds 1-deoxy-D-xylulose-5-phosphate (DXP) and 3-amino-2-oxopropyl phosphate (1-amino-acetone-3-phosphate or AAP) to form pyridoxine 5'-phosphate (PNP) and inorganic phosphate. This chain is Pyridoxine 5'-phosphate synthase, found in Pectobacterium atrosepticum (strain SCRI 1043 / ATCC BAA-672) (Erwinia carotovora subsp. atroseptica).